Reading from the N-terminus, the 254-residue chain is Hydrolase tropI (254 aa).

Catalysis depends on residues C141, D187, and H219.

The protein belongs to the dienelactone hydrolase family.

It functions in the pathway secondary metabolite biosynthesis. Functionally, hydrolase; part of the gene cluster that mediates the biosynthesis of the tropolone class of fungal maleic anhydrides. The pathway begins with the synthesis of 3-methylorcinaldehyde by the non-reducing polyketide synthase (PKS) tropA. 3-methylorcinaldehyde is the substrate for the FAD-dependent monooxygenase tropB to yield a dearomatized hydroxycyclohexadione. The 2-oxoglutarate-dependent dioxygenase tropC then performs the oxidative ring expansion to provide the first tropolone metabolite stipitaldehyde. Trop D converts stipitaldehyde into stipitacetal which is in turn converted to stipitalide by the short-chain dehydrogenase/reductase tropE. The next steps involve tropF, tropG, tropH, tropI and tropJ to form successive tropolone maleic anhydrides including stipitaldehydic, stipitatonic and stipitatic acids. This chain is Hydrolase tropI, found in Talaromyces stipitatus (strain ATCC 10500 / CBS 375.48 / QM 6759 / NRRL 1006) (Penicillium stipitatum).